The primary structure comprises 389 residues: Phospho-N-acetylmuramoyl-pentapeptide-transferase (389 aa).

10 helical membrane-spanning segments follow: residues 25–45 (RAVA…PWVI), 73–93 (TMGG…WADL), 97–117 (FIWI…VDDY), 135–155 (FWQS…VSEA), 189–209 (SMTY…VIVG), 222–242 (GLVI…AYVM), 259–279 (AGEM…FLWF), 286–306 (VFMG…IAVI), 311–331 (IVLF…MLQV), and 366–386 (QVVV…LSTL).

The protein belongs to the glycosyltransferase 4 family. MraY subfamily. It depends on Mg(2+) as a cofactor.

The protein localises to the cell inner membrane. It carries out the reaction UDP-N-acetyl-alpha-D-muramoyl-L-alanyl-gamma-D-glutamyl-meso-2,6-diaminopimeloyl-D-alanyl-D-alanine + di-trans,octa-cis-undecaprenyl phosphate = di-trans,octa-cis-undecaprenyl diphospho-N-acetyl-alpha-D-muramoyl-L-alanyl-D-glutamyl-meso-2,6-diaminopimeloyl-D-alanyl-D-alanine + UMP. The protein operates within cell wall biogenesis; peptidoglycan biosynthesis. In terms of biological role, catalyzes the initial step of the lipid cycle reactions in the biosynthesis of the cell wall peptidoglycan: transfers peptidoglycan precursor phospho-MurNAc-pentapeptide from UDP-MurNAc-pentapeptide onto the lipid carrier undecaprenyl phosphate, yielding undecaprenyl-pyrophosphoryl-MurNAc-pentapeptide, known as lipid I. The chain is Phospho-N-acetylmuramoyl-pentapeptide-transferase from Paraburkholderia phymatum (strain DSM 17167 / CIP 108236 / LMG 21445 / STM815) (Burkholderia phymatum).